Here is a 467-residue protein sequence, read N- to C-terminus: Ammonium transporter Rh type C (467 aa).

At 1-3 (MRL) the chain is on the cytoplasmic side. The helical transmembrane segment at 4-24 (RLPVVCFLWEIAMIVLFGIFV) threads the bilayer. Residues 25–55 (RYNDEADPHWSEFMKAQNITSDIQNDYYFRY) lie on the Extracellular side of the membrane. Asparagine 42 carries an N-linked (GlcNAc...) asparagine glycan. The helical transmembrane segment at 56-76 (PSFQDVHVMIFVGFGFLMTFL) threads the bilayer. Over 77-80 (KRYG) the chain is Cytoplasmic. Residues 81–101 (FGSVAFNFLLAAFGIQWAILM) traverse the membrane as a helical segment. Over 102 to 119 (QGWFHTFKNGKILIGVES) the chain is Extracellular. The chain crosses the membrane as a helical span at residues 120–139 (LINADFCVGSVCIAFGAILG). The Cytoplasmic portion of the chain corresponds to 140–145 (KVSPVQ). Residues 146–168 (IMVMTLFQVTLFAVNEWILLNLL) form a helical membrane-spanning segment. Over 169–173 (HVNDA) the chain is Extracellular. A helical membrane pass occupies residues 174–194 (GGSMTIHTFGAYFGLTVAWIL). The Cytoplasmic segment spans residues 195–213 (NRPRLKQTNDKEGSVYVSD). A helical transmembrane segment spans residues 214–234 (LFSMIGTLFLWMFWPSFNSAV). Topologically, residues 235-245 (SYHGDAQHRAA) are extracellular. A helical membrane pass occupies residues 246-266 (INTYCSLAACVLTTVAISSVV). The Cytoplasmic segment spans residues 267–271 (NKKGK). Residues 272–292 (LEMVHIQNATLAGGVAVGTAA) form a helical membrane-spanning segment. The Extracellular portion of the chain corresponds to 293-295 (EMM). A helical transmembrane segment spans residues 296–316 (LTPYGSLIVGFICGIVSTLGF). Topologically, residues 317-337 (TYCSPFLSNKLRLHDTCGIHN) are cytoplasmic. The helical transmembrane segment at 338 to 358 (LHAMPGLIGGIVGAVTAACAT) threads the bilayer. The Extracellular portion of the chain corresponds to 359–390 (EAVYTADGLKKMFRFEGDYATRTPSMQGGYQA). A helical membrane pass occupies residues 391–411 (AGLCVSLAFGLVGGTVVGCIL). Residues 412–467 (KLPIWGDPSDENCFDDEVYWELPEEDEEEHLGAANQYVTHLPENFKLPDRTEVAFK) are Cytoplasmic-facing.

The protein belongs to the ammonium transporter (TC 2.A.49) family. Rh subfamily. Homotrimer.

Its subcellular location is the apical cell membrane. Its function is as follows. Functions as an ammonia transporter. This Xenopus tropicalis (Western clawed frog) protein is Ammonium transporter Rh type C (rhcg).